Here is a 535-residue protein sequence, read N- to C-terminus: Alpha-1,3-mannosyl-glycoprotein 4-beta-N-acetylglucosaminyltransferase A (535 aa).

Topologically, residues Met1–Gly6 are cytoplasmic. Residues Thr7 to Trp27 traverse the membrane as a helical; Signal-anchor for type II membrane protein segment. Topologically, residues Gln28–Asn535 are lumenal. The stretch at Lys31 to Gln57 forms a coiled coil. Residues Asn77 and Asn458 are each glycosylated (N-linked (GlcNAc...) asparagine). Phosphoserine is present on Ser474.

Belongs to the glycosyltransferase 54 family. A divalent metal cation serves as cofactor. In terms of processing, N-glycosylated. As to expression, highly expressed in small intestine, kidney, lung and spleen. Weakly expressed in brain, heart and liver.

Its subcellular location is the golgi apparatus membrane. The protein resides in the secreted. The catalysed reaction is N(4)-{beta-D-GlcNAc-(1-&gt;2)-alpha-D-Man-(1-&gt;3)-[beta-D-GlcNAc-(1-&gt;2)-alpha-D-Man-(1-&gt;6)]-beta-D-Man-(1-&gt;4)-beta-D-GlcNAc-(1-&gt;4)-beta-D-GlcNAc}-L-asparaginyl-[protein] + UDP-N-acetyl-alpha-D-glucosamine = N(4)-{beta-D-GlcNAc-(1-&gt;2)-[beta-D-GlcNAc-(1-&gt;4)]-alpha-D-Man-(1-&gt;3)-[beta-D-GlcNAc-(1-&gt;2)-alpha-D-Man-(1-&gt;6)]-beta-D-Man-(1-&gt;4)-beta-D-GlcNAc-(1-&gt;4)-beta-D-GlcNAc}-L-asparaginyl-[protein] + UDP + H(+). It catalyses the reaction an N(4)-{beta-D-GlcNAc-(1-&gt;2)-alpha-D-Man-(1-&gt;3)-[alpha-D-Man-(1-&gt;6)]-beta-D-Man-(1-&gt;4)-beta-D-GlcNAc-(1-&gt;4)-beta-D-GlcNAc}-L-asparaginyl-[protein] + UDP-N-acetyl-alpha-D-glucosamine = an N(4)-{beta-D-GlcNAc-(1-&gt;2)-[beta-D-GlcNAc-(1-&gt;4)]-alpha-D-Man-(1-&gt;3)-[alpha-D-Man-(1-&gt;6)]-beta-D-Man-(1-&gt;4)-beta-D-GlcNAc-(1-&gt;4)-beta-D-GlcNAc}-L-asparaginyl-[protein] + UDP + H(+). The enzyme catalyses an N(4)-{beta-D-GlcNAc-(1-&gt;2)-alpha-D-Man-(1-&gt;3)-[beta-D-GlcNAc-(1-&gt;2)-[beta-D-GlcNAc-(1-&gt;6)]-alpha-D-Man-(1-&gt;6)]-beta-D-Man-(1-&gt;4)-beta-D-GlcNAc-(1-&gt;4)-beta-D-GlcNAc}-L-asparaginyl-[protein] + UDP-N-acetyl-alpha-D-glucosamine = an N(4)-{beta-D-GlcNAc-(1-&gt;2)-[beta-D-GlcNAc-(1-&gt;4)]-alpha-D-Man-(1-&gt;3)-[beta-D-GlcNAc-(1-&gt;2)-[beta-D-GlcNAc-(1-&gt;6)]-alpha-D-Man-(1-&gt;6)]-beta-D-Man-(1-&gt;4)-beta-D-GlcNAc-(1-&gt;4)-beta-D-GlcNAc}-L-asparaginyl-[protein] + UDP + H(+). It carries out the reaction an N(4)-{beta-D-GlcNAc-(1-&gt;2)-alpha-D-Man-(1-&gt;3)-[beta-D-GlcNAc-(1-&gt;2)-alpha-D-Man-(1-&gt;6)]-beta-D-Man-(1-&gt;4)-beta-D-GlcNAc-(1-&gt;4)-[alpha-L-Fuc-(1-&gt;6)]-beta-D-GlcNAc}-L-asparaginyl-[protein] + UDP-N-acetyl-alpha-D-glucosamine = N(4)-{beta-D-GlcNAc-(1-&gt;2)-[beta-D-GlcNAc-(1-&gt;4)]-alpha-D-Man-(1-&gt;3)-[beta-D-GlcNAc-(1-&gt;2)-alpha-D-Man-(1-&gt;6)]-beta-D-Man-(1-&gt;4)-beta-D-GlcNAc-(1-&gt;4)-[alpha-L-Fuc-(1-&gt;6)]-beta-D-GlcNAc}-asparaginyl-[protein] + UDP + H(+). The catalysed reaction is an N(4)-{beta-D-GlcNAc-(1-&gt;2)-alpha-D-Man-(1-&gt;3)-[beta-D-Gal-(1-&gt;4)-beta-D-GlcNAc-(1-&gt;2)-alpha-D-Man-(1-&gt;6)]-beta-D-Man-(1-&gt;4)-beta-D-GlcNAc-(1-&gt;4)-beta-D-GlcNAc}-L-asparaginyl-[protein] + UDP-N-acetyl-alpha-D-glucosamine = an N(4)-{beta-D-GlcNAc-(1-&gt;2)-[beta-D-GlcNAc-(1-&gt;4)]-alpha-D-Man-(1-&gt;3)-[beta-D-Gal-(1-&gt;4)-beta-D-GlcNAc-(1-&gt;2)-alpha-D-Man-(1-&gt;6)]-beta-D-Man-(1-&gt;4)-beta-D-GlcNAc-(1-&gt;4)-beta-D-GlcNAc}-L-asparaginyl-[protein] + UDP + H(+). It catalyses the reaction N(4)-{beta-D-GlcNAc-(1-&gt;2)-alpha-D-Man-(1-&gt;3)-[alpha-D-Man-(1-&gt;3)-{alpha-D-Man-(1-&gt;6)}-alpha-D-Man-(1-&gt;6)]-beta-D-Man-(1-&gt;4)-beta-D-GlcNAc-(1-&gt;4)-beta-D-GlcNAc}-asparaginyl-[protein] + UDP-N-acetyl-alpha-D-glucosamine = N(4)-{beta-D-GlcNAc-(1-&gt;2)-[beta-D-GlcNAc-(1-&gt;4)]-alpha-D-Man-(1-&gt;3)-[alpha-D-Man-(1-&gt;3)-{alpha-D-Man-(1-&gt;6)}-alpha-D-Man-(1-&gt;6)]-beta-D-Man-(1-&gt;4)-beta-D-GlcNAc-(1-&gt;4)-beta-D-GlcNAc}-asparaginyl-[protein] + UDP + H(+). The enzyme catalyses N(4)-{beta-D-GlcNAc-(1-&gt;2)-alpha-D-Man-(1-&gt;3)-beta-D-Man-(1-&gt;4)-beta-D-GlcNAc-(1-&gt;4)-beta-D-GlcNAc}-asparaginyl-[protein] + UDP-N-acetyl-alpha-D-glucosamine = N(4)-{beta-D-GlcNAc-(1-&gt;2)-[beta-D-GlcNAc-(1-&gt;4)]-alpha-D-Man-(1-&gt;3)-beta-D-Man-(1-&gt;4)-beta-D-GlcNAc-(1-&gt;4)-beta-D-GlcNAc}-asparaginyl-[protein] + UDP + H(+). Its pathway is protein modification; protein glycosylation. Its activity is regulated as follows. Inhibited by UDP. Its function is as follows. Glycosyltransferase that catalyze the transfer of GlcNAc from UDP-GlcNAc to the GlcNAcbeta1-2Manalpha1-3 arm of the core structure of N-linked glycans through a beta1-4 linkage and participates in the production of tri- and tetra-antennary N-linked sugar chains. Involved in glucose transport by mediating SLC2A2/GLUT2 glycosylation, thereby controlling cell-surface expression of SLC2A2 in pancreatic beta cells. The polypeptide is Alpha-1,3-mannosyl-glycoprotein 4-beta-N-acetylglucosaminyltransferase A (Bos taurus (Bovine)).